Consider the following 323-residue polypeptide: GTP 3',8-cyclase (323 aa).

One can recognise a Radical SAM core domain in the interval 4–233 (KYGREIDYLR…NGPAKYISIE (230 aa)). Residue arginine 13 participates in GTP binding. Residues cysteine 20 and cysteine 24 each coordinate [4Fe-4S] cluster. Residue tyrosine 26 coordinates S-adenosyl-L-methionine. Residue cysteine 27 coordinates [4Fe-4S] cluster. Residue arginine 63 coordinates GTP. Glycine 67 serves as a coordination point for S-adenosyl-L-methionine. Threonine 94 provides a ligand contact to GTP. S-adenosyl-L-methionine is bound at residue serine 118. Lysine 154 contacts GTP. Methionine 188 contributes to the S-adenosyl-L-methionine binding site. Positions 250 and 253 each coordinate [4Fe-4S] cluster. 255-257 (RIR) contributes to the GTP binding site. Cysteine 267 lines the [4Fe-4S] cluster pocket.

Belongs to the radical SAM superfamily. MoaA family. Monomer and homodimer. [4Fe-4S] cluster serves as cofactor.

The enzyme catalyses GTP + AH2 + S-adenosyl-L-methionine = (8S)-3',8-cyclo-7,8-dihydroguanosine 5'-triphosphate + 5'-deoxyadenosine + L-methionine + A + H(+). Its pathway is cofactor biosynthesis; molybdopterin biosynthesis. In terms of biological role, catalyzes the cyclization of GTP to (8S)-3',8-cyclo-7,8-dihydroguanosine 5'-triphosphate. This chain is GTP 3',8-cyclase, found in Clostridium perfringens (strain 13 / Type A).